A 325-amino-acid polypeptide reads, in one-letter code: tRNA(Ile)-lysidine synthase (325 aa).

An ATP-binding site is contributed by S34 to S39.

It belongs to the tRNA(Ile)-lysidine synthase family.

The protein localises to the cytoplasm. The enzyme catalyses cytidine(34) in tRNA(Ile2) + L-lysine + ATP = lysidine(34) in tRNA(Ile2) + AMP + diphosphate + H(+). Functionally, ligates lysine onto the cytidine present at position 34 of the AUA codon-specific tRNA(Ile) that contains the anticodon CAU, in an ATP-dependent manner. Cytidine is converted to lysidine, thus changing the amino acid specificity of the tRNA from methionine to isoleucine. In Rhodococcus erythropolis (strain PR4 / NBRC 100887), this protein is tRNA(Ile)-lysidine synthase.